Consider the following 84-residue polypeptide: Beta-toxin Ct16 (84 aa).

A signal peptide spans 1–19 (MNYFILLFVATFLLLDVNC). An LCN-type CS-alpha/beta domain is found at 21–80 (KDGYPVDANNCKFECWKNEYCDELCKAKRAESGYCYKLKLSCWCEGLPDDEPTKTSDRCY). 4 disulfides stabilise this stretch: Cys-31–Cys-79, Cys-35–Cys-55, Cys-41–Cys-62, and Cys-45–Cys-64. Thr-82 is modified (threonine amide).

It belongs to the long (4 C-C) scorpion toxin superfamily. Sodium channel inhibitor family. Alpha subfamily. In terms of tissue distribution, expressed by the venom gland.

The protein resides in the secreted. Its function is as follows. Alpha toxins bind voltage-independently at site-3 of sodium channels (Nav) and inhibit the inactivation of the activated channels, thereby blocking neuronal transmission. Is possibly toxic to mice. This Centruroides tecomanus (Scorpion) protein is Beta-toxin Ct16.